A 323-amino-acid polypeptide reads, in one-letter code: tRNA N6-adenosine threonylcarbamoyltransferase (323 aa).

Fe cation contacts are provided by His106, His110, and Tyr127. Substrate contacts are provided by residues 127-131, Asp159, Gly172, Glu176, and Asn255; that span reads YVSGA. Residue Asp283 participates in Fe cation binding.

This sequence belongs to the KAE1 / TsaD family. In terms of assembly, monomer. Component of the KEOPS complex that consists of Kae1, Bud32, Cgi121 and Pcc1; the whole complex dimerizes. Fe(2+) serves as cofactor.

The protein resides in the cytoplasm. The enzyme catalyses L-threonylcarbamoyladenylate + adenosine(37) in tRNA = N(6)-L-threonylcarbamoyladenosine(37) in tRNA + AMP + H(+). In terms of biological role, required for the formation of a threonylcarbamoyl group on adenosine at position 37 (t(6)A37) in tRNAs that read codons beginning with adenine. Is a component of the KEOPS complex that is probably involved in the transfer of the threonylcarbamoyl moiety of threonylcarbamoyl-AMP (TC-AMP) to the N6 group of A37. Kae1 likely plays a direct catalytic role in this reaction, but requires other protein(s) of the complex to fulfill this activity. The chain is tRNA N6-adenosine threonylcarbamoyltransferase from Methanocella arvoryzae (strain DSM 22066 / NBRC 105507 / MRE50).